The sequence spans 247 residues: MCRDVNVYYGEKHAIQNVSLDVGHNEVIALIGPSGCGKSTFLRCLNRMNDTIVGCRVTGSIRLDGQDIYDGGLDVVPLRAQVGMVFQKPNPFPKSIYENVAYGPKIHGLANSKAELEEIVESSLRRAGLWDEVKDDLAKPGTSLSGGQQQRLCIARTIAVSPEVILMDEPCSALDPIATAKIEQLIDELRELYTIAIVTHSMQQAARVSQRTAYFHLGRLIEVGDTAQVFTNPRHPLTEDYITGRFG.

An ABC transporter domain is found at 2-242 (CRDVNVYYGE…PRHPLTEDYI (241 aa)). 32–39 (GPSGCGKS) lines the ATP pocket.

The protein belongs to the ABC transporter superfamily. Phosphate importer (TC 3.A.1.7) family. As to quaternary structure, the complex is composed of two ATP-binding proteins (PstB), two transmembrane proteins (PstC and PstA) and a solute-binding protein (PstS).

It is found in the cell inner membrane. The catalysed reaction is phosphate(out) + ATP + H2O = ADP + 2 phosphate(in) + H(+). Its function is as follows. Part of the ABC transporter complex PstSACB involved in phosphate import. Responsible for energy coupling to the transport system. The protein is Phosphate import ATP-binding protein PstB of Methylococcus capsulatus (strain ATCC 33009 / NCIMB 11132 / Bath).